Consider the following 502-residue polypeptide: Probable cytosol aminopeptidase (502 aa).

Mn(2+)-binding residues include Lys-265 and Asp-270. Lys-277 is a catalytic residue. Residues Asp-288, Asp-347, and Glu-349 each contribute to the Mn(2+) site. Arg-351 is a catalytic residue.

This sequence belongs to the peptidase M17 family. Mn(2+) serves as cofactor.

The protein resides in the cytoplasm. It catalyses the reaction Release of an N-terminal amino acid, Xaa-|-Yaa-, in which Xaa is preferably Leu, but may be other amino acids including Pro although not Arg or Lys, and Yaa may be Pro. Amino acid amides and methyl esters are also readily hydrolyzed, but rates on arylamides are exceedingly low.. It carries out the reaction Release of an N-terminal amino acid, preferentially leucine, but not glutamic or aspartic acids.. In terms of biological role, presumably involved in the processing and regular turnover of intracellular proteins. Catalyzes the removal of unsubstituted N-terminal amino acids from various peptides. This Rickettsia bellii (strain RML369-C) protein is Probable cytosol aminopeptidase.